The following is a 353-amino-acid chain: Methylthioribose-1-phosphate isomerase (353 aa).

Residues 51–53 (RGA), Arg-94, and Gln-203 contribute to the substrate site. The active-site Proton donor is Asp-244. Residue 254–255 (NK) coordinates substrate.

This sequence belongs to the eIF-2B alpha/beta/delta subunits family. MtnA subfamily.

The catalysed reaction is 5-(methylsulfanyl)-alpha-D-ribose 1-phosphate = 5-(methylsulfanyl)-D-ribulose 1-phosphate. The protein operates within amino-acid biosynthesis; L-methionine biosynthesis via salvage pathway; L-methionine from S-methyl-5-thio-alpha-D-ribose 1-phosphate: step 1/6. In terms of biological role, catalyzes the interconversion of methylthioribose-1-phosphate (MTR-1-P) into methylthioribulose-1-phosphate (MTRu-1-P). The chain is Methylthioribose-1-phosphate isomerase from Nostoc punctiforme (strain ATCC 29133 / PCC 73102).